The primary structure comprises 260 residues: Lys-63-specific deubiquitinase BRCC36 (260 aa).

An MPN domain is found at 6–149; the sequence is VHLESDAFLV…YTCFQSVQAQ (144 aa). 3 residues coordinate Zn(2+): His-92, His-94, and Asp-105. The short motif at 92–105 is the JAMM motif element; that stretch reads HSHPHITVWPSHVD.

This sequence belongs to the peptidase M67A family. BRCC36 subfamily. Component of the BRCA1-A complex, at least composed of brca1, bard1, uimc1/rap80, abraxas1, brcc3/brcc36, babam2 and babam1/nba1. In the BRCA1-A complex, interacts directly with abraxas1 and babam2. Component of the BRISC complex, at least composed of abraxas2, brcc3/brcc36, babam2 and babam1/nba1. Within the complex, interacts directly with abraxas2. Both the BRCA1-A complex and the BRISC complex bind polyubiquitin. The cofactor is Zn(2+).

It localises to the nucleus. It is found in the cytoplasm. The protein localises to the cytoskeleton. Its subcellular location is the spindle pole. Functionally, metalloprotease that specifically cleaves 'Lys-63'-linked polyubiquitin chains. Does not have activity toward 'Lys-48'-linked polyubiquitin chains. Component of the BRCA1-A complex, a complex that specifically recognizes 'Lys-63'-linked ubiquitinated histones H2A and H2AX at DNA lesions sites, leading to target the brca1-bard1 heterodimer to sites of DNA damage at double-strand breaks (DSBs). In the BRCA1-A complex, it specifically removes 'Lys-63'-linked ubiquitin on histones H2A and H2AX, antagonizing the rnf8-dependent ubiquitination at double-strand breaks (DSBs). Catalytic subunit of the BRISC complex, a multiprotein complex that specifically cleaves 'Lys-63'-linked ubiquitin in various substrates. Mediates the specific 'Lys-63'-specific deubiquitination associated with the COP9 signalosome complex (CSN), via the interaction of the BRISC complex with the CSN complex. The BRISC complex is required for normal mitotic spindle assembly and microtubule attachment to kinetochores via its role in deubiquitinating numa1. Plays a role in interferon signaling via its role in the deubiquitination of the interferon receptor ifnar1; deubiquitination increases ifnar1 activity by enhancing its stability and cell surface expression. Acts as a regulator of the NLRP3 inflammasome by mediating deubiquitination of nlrp3. Down-regulates the response to bacterial lipopolysaccharide (LPS) via its role in ifnar1 deubiquitination. The sequence is that of Lys-63-specific deubiquitinase BRCC36 (brcc3) from Salmo salar (Atlantic salmon).